We begin with the raw amino-acid sequence, 680 residues long: DNA-directed RNA polymerase subunit beta' (680 aa).

Zn(2+)-binding residues include cysteine 69, cysteine 71, cysteine 87, and cysteine 90. 3 residues coordinate Mg(2+): aspartate 489, aspartate 491, and aspartate 493.

Belongs to the RNA polymerase beta' chain family. RpoC1 subfamily. In plastids the minimal PEP RNA polymerase catalytic core is composed of four subunits: alpha, beta, beta', and beta''. When a (nuclear-encoded) sigma factor is associated with the core the holoenzyme is formed, which can initiate transcription. Mg(2+) serves as cofactor. It depends on Zn(2+) as a cofactor.

The protein resides in the plastid. The protein localises to the chloroplast. The catalysed reaction is RNA(n) + a ribonucleoside 5'-triphosphate = RNA(n+1) + diphosphate. Its function is as follows. DNA-dependent RNA polymerase catalyzes the transcription of DNA into RNA using the four ribonucleoside triphosphates as substrates. The sequence is that of DNA-directed RNA polymerase subunit beta' from Nasturtium officinale (Watercress).